Reading from the N-terminus, the 327-residue chain is 2-methoxy-6-polyprenyl-1,4-benzoquinol methylase, mitochondrial (327 aa).

Residues 1-49 (MAAPRCCVLWRVCGRGWWRATGHCRLPGCHRSWPWATLGTRSLSQEKRA) constitute a mitochondrion transit peptide. S-adenosyl-L-methionine-binding positions include T117, D171, and 199-200 (DA).

Belongs to the class I-like SAM-binding methyltransferase superfamily. MenG/UbiE family. Component of a multi-subunit COQ enzyme complex, composed of at least COQ3, COQ4, COQ5, COQ6, COQ7 and COQ9. Interacts with PYURF; the interaction is direct, stabilizes COQ5 protein and associates PYURF with COQ enzyme complex.

The protein resides in the mitochondrion inner membrane. It carries out the reaction 2-methoxy-6-(all-trans-decaprenyl)benzene-1,4-diol + S-adenosyl-L-methionine = 5-methoxy-2-methyl-3-(all-trans-decaprenyl)benzene-1,4-diol + S-adenosyl-L-homocysteine + H(+). Its pathway is cofactor biosynthesis; ubiquinone biosynthesis. Its function is as follows. Methyltransferase required for the conversion of 2-decaprenyl-6-methoxy-1,4-benzoquinol (DDMQH2) to 2-decaprenyl-3-methyl-6-methoxy-1,4-benzoquinol (DMQH2). The chain is 2-methoxy-6-polyprenyl-1,4-benzoquinol methylase, mitochondrial from Mus musculus (Mouse).